The sequence spans 357 residues: S-adenosylmethionine:tRNA ribosyltransferase-isomerase (357 aa).

This sequence belongs to the QueA family. Monomer.

It is found in the cytoplasm. It carries out the reaction 7-aminomethyl-7-carbaguanosine(34) in tRNA + S-adenosyl-L-methionine = epoxyqueuosine(34) in tRNA + adenine + L-methionine + 2 H(+). It functions in the pathway tRNA modification; tRNA-queuosine biosynthesis. In terms of biological role, transfers and isomerizes the ribose moiety from AdoMet to the 7-aminomethyl group of 7-deazaguanine (preQ1-tRNA) to give epoxyqueuosine (oQ-tRNA). The sequence is that of S-adenosylmethionine:tRNA ribosyltransferase-isomerase from Buchnera aphidicola subsp. Acyrthosiphon pisum (strain Tuc7).